A 207-amino-acid chain; its full sequence is Pyridoxal 5'-phosphate synthase subunit PdxT (207 aa).

Residue 53 to 55 coordinates L-glutamine; sequence GES. Catalysis depends on C85, which acts as the Nucleophile. L-glutamine-binding positions include R114 and 143–144; that span reads IR. Residues H184 and E186 each act as charge relay system in the active site.

Belongs to the glutaminase PdxT/SNO family. As to quaternary structure, in the presence of PdxS, forms a dodecamer of heterodimers. Only shows activity in the heterodimer.

It carries out the reaction aldehydo-D-ribose 5-phosphate + D-glyceraldehyde 3-phosphate + L-glutamine = pyridoxal 5'-phosphate + L-glutamate + phosphate + 3 H2O + H(+). The catalysed reaction is L-glutamine + H2O = L-glutamate + NH4(+). Its pathway is cofactor biosynthesis; pyridoxal 5'-phosphate biosynthesis. In terms of biological role, catalyzes the hydrolysis of glutamine to glutamate and ammonia as part of the biosynthesis of pyridoxal 5'-phosphate. The resulting ammonia molecule is channeled to the active site of PdxS. This Acidothermus cellulolyticus (strain ATCC 43068 / DSM 8971 / 11B) protein is Pyridoxal 5'-phosphate synthase subunit PdxT.